Reading from the N-terminus, the 218-residue chain is Cytochrome b6 (218 aa).

Residues 35 to 55 (IFYCLGGITLVCFLIQFATGF) form a helical membrane-spanning segment. Heme c is bound at residue C38. Heme b is bound by residues H89 and H103. 3 consecutive transmembrane segments (helical) span residues 93–113 (ASMM…TGGF), 119–139 (LTWV…VTGY), and 189–209 (LHTF…FLMI). Heme b-binding residues include H190 and H205.

The protein belongs to the cytochrome b family. PetB subfamily. As to quaternary structure, the 4 large subunits of the cytochrome b6-f complex are cytochrome b6, subunit IV (17 kDa polypeptide, PetD), cytochrome f and the Rieske protein, while the 4 small subunits are PetG, PetL, PetM and PetN. The complex functions as a dimer. The cofactor is heme b. Heme c is required as a cofactor.

The protein localises to the cellular thylakoid membrane. Component of the cytochrome b6-f complex, which mediates electron transfer between photosystem II (PSII) and photosystem I (PSI), cyclic electron flow around PSI, and state transitions. The protein is Cytochrome b6 of Synechococcus sp. (strain CC9311).